The chain runs to 180 residues: Adenine phosphoribosyltransferase (180 aa).

This sequence belongs to the purine/pyrimidine phosphoribosyltransferase family. As to quaternary structure, homodimer.

It is found in the cytoplasm. The catalysed reaction is AMP + diphosphate = 5-phospho-alpha-D-ribose 1-diphosphate + adenine. It participates in purine metabolism; AMP biosynthesis via salvage pathway; AMP from adenine: step 1/1. Its function is as follows. Catalyzes a salvage reaction resulting in the formation of AMP, that is energically less costly than de novo synthesis. The polypeptide is Adenine phosphoribosyltransferase (Pasteurella multocida (strain Pm70)).